A 431-amino-acid chain; its full sequence is Glutamate-1-semialdehyde 2,1-aminomutase (431 aa).

Lys269 carries the post-translational modification N6-(pyridoxal phosphate)lysine.

This sequence belongs to the class-III pyridoxal-phosphate-dependent aminotransferase family. HemL subfamily. As to quaternary structure, homodimer. It depends on pyridoxal 5'-phosphate as a cofactor.

It localises to the cytoplasm. The catalysed reaction is (S)-4-amino-5-oxopentanoate = 5-aminolevulinate. Its pathway is porphyrin-containing compound metabolism; protoporphyrin-IX biosynthesis; 5-aminolevulinate from L-glutamyl-tRNA(Glu): step 2/2. It participates in porphyrin-containing compound metabolism; chlorophyll biosynthesis. The polypeptide is Glutamate-1-semialdehyde 2,1-aminomutase (Chlorobium luteolum (strain DSM 273 / BCRC 81028 / 2530) (Pelodictyon luteolum)).